The primary structure comprises 613 residues: Potassium voltage-gated channel subfamily A member 5 (613 aa).

A disordered region spans residues 1–108; that stretch reads MEIALVPLEN…EGDPGLGTVE (108 aa). Positions 1 to 211 are tetramerization domain; that stretch reads MEIALVPLEN…FYQLGDEAME (211 aa). Over 1–247 the chain is Cytoplasmic; that stretch reads MEIALVPLEN…LIFEYPESSG (247 aa). The span at 45–62 shows a compositional bias: basic and acidic residues; the sequence is GPKEPAPKGRGAQRDADS. Repeat copies occupy residues 61 to 71 and 72 to 82. Residues 61 to 82 form a 2 X 11 AA tandem repeat of D-[SP]-G-V-R-P-L-P-P-L-P region; sequence DSGVRPLPPLPDPGVRPLPPLP. The span at 66-83 shows a compositional bias: pro residues; the sequence is PLPPLPDPGVRPLPPLPE. Positions 84–93 are enriched in basic and acidic residues; it reads ELPRPRRPPP. A Glycyl lysine isopeptide (Lys-Gly) (interchain with G-Cter in SUMO) cross-link involves residue lysine 221. Residues 248 to 269 traverse the membrane as a helical segment; the sequence is SARAIAIVSVLVILISIITFCL. Topologically, residues 270–323 are extracellular; it reads ETLPEFRDERELLRHPPAPHQPPAPAPGANGSGVMAPPSGPTVAPLLPRTLADP. Residues 282-304 form a disordered region; it reads LRHPPAPHQPPAPAPGANGSGVM. The segment covering 285–295 has biased composition (pro residues); that stretch reads PPAPHQPPAPA. A helical transmembrane segment spans residues 324 to 345; sequence FFIVETTCVIWFTFELLVRFFA. Cysteine 346 carries the S-palmitoyl cysteine lipid modification. Topologically, residues 346 to 356 are cytoplasmic; the sequence is CPSKAGFSRNI. A helical membrane pass occupies residues 357 to 377; it reads MNIIDVVAIFPYFITLGTELA. At 378-395 the chain is on the extracellular side; that stretch reads EQQPGGGGGGQNGQQAMS. The chain crosses the membrane as a helical; Voltage-sensor span at residues 396–416; sequence LAILRVIRLVRVFRIFKLSRH. At 417–431 the chain is on the cytoplasmic side; sequence SKGLQILGKTLQASM. The interval 418–431 is S4-S5 linker; sequence KGLQILGKTLQASM. A helical transmembrane segment spans residues 432–453; sequence RELGLLIFFLFIGVILFSSAVY. The Extracellular segment spans residues 454–467; that stretch reads FAEADNQGTHFSSI. The segment at residues 468–479 is an intramembrane region (helical); sequence PDAFWWAVVTMT. The short motif at 480-485 is the Selectivity filter element; sequence TVGYGD. Residues 480–487 lie within the membrane without spanning it; sequence TVGYGDMR. Topologically, residues 488-494 are extracellular; it reads PITVGGK. A helical transmembrane segment spans residues 495–523; that stretch reads IVGSLCAIAGVLTIALPVPVIVSNFNYFY. Topologically, residues 524 to 613 are cytoplasmic; that stretch reads HRETDHEEPA…CLDTSRETDL (90 aa). A disordered region spans residues 532 to 559; the sequence is PAVLKEEQGTQSQGPGLDRGVQRKVSGS. Lysine 536 is covalently cross-linked (Glycyl lysine isopeptide (Lys-Gly) (interchain with G-Cter in SUMO)). Residue serine 557 is modified to Phosphoserine; by PKA. The PDZ-binding signature appears at 611 to 613; it reads TDL.

The protein belongs to the potassium channel family. A (Shaker) (TC 1.A.1.2) subfamily. Kv1.5/KCNA5 sub-subfamily. Homotetramer and heterotetramer of potassium channel proteins. Interacts with DLG1, which enhances channel currents. Forms a ternary complex with DLG1 and CAV3. Interacts with KCNAB1. Interacts with UBE2I. Interacts with XIRP2; the interaction is required for normal action potential configuration in the heart. Glycosylated. In terms of processing, sumoylated on Lys-221, and Lys-536, preferentially with SUMO3. Sumoylation regulates the voltage sensitivity of the channel. As to expression, pancreatic islets and insulinoma.

It is found in the cell membrane. It carries out the reaction K(+)(in) = K(+)(out). Inhibited by 4-aminopyridine, nicotine, bepridil, correolide, and endothelin-1. In terms of biological role, voltage-gated potassium channel that mediates transmembrane potassium transport in excitable membranes. Forms tetrameric potassium-selective channels through which potassium ions pass in accordance with their electrochemical gradient. The channel alternates between opened and closed conformations in response to the voltage difference across the membrane. Can form functional homotetrameric channels and heterotetrameric channels that contain variable proportions of KCNA1, KCNA2, KCNA4, KCNA5, and possibly other family members as well; channel properties depend on the type of alpha subunits that are part of the channel. Channel properties are modulated by cytoplasmic beta subunits that regulate the subcellular location of the alpha subunits and promote rapid inactivation. Homotetrameric channels display rapid activation and slow inactivation. Required for normal electrical conduction including formation of the infranodal ventricular conduction system and normal action potential configuration, as a result of its interaction with XIRP2. May play a role in regulating the secretion of insulin in normal pancreatic islets. Exhibits a faster depolarization rate, reduced voltage-dependent recovery from inactivation and an excessive cumulative inactivation. The polypeptide is Potassium voltage-gated channel subfamily A member 5 (KCNA5) (Homo sapiens (Human)).